Here is a 235-residue protein sequence, read N- to C-terminus: Ribosomal RNA-processing protein 17 (235 aa).

Residues 49–110 are a coiled coil; it reads QRQKKAQEFI…AKNDKTEDLQ (62 aa). Residues 99 to 108 show a composition bias toward basic and acidic residues; sequence EDAKNDKTED. Disordered stretches follow at residues 99–138 and 209–235; these read EDAKNDKTEDLQVESDESWHGFDSDKDDGDNDNNESSVKP and RVKKFRYLTKNERRINQRKANDNKRRR. Phosphoserine is present on residues serine 113, serine 116, and serine 122. Basic and acidic residues predominate over residues 217–235; the sequence is TKNERRINQRKANDNKRRR.

The protein belongs to the RRP17 family.

Its subcellular location is the nucleus. The protein resides in the nucleolus. Functionally, essential protein involved in ribosomal RNA processing. The polypeptide is Ribosomal RNA-processing protein 17 (RRP17) (Saccharomyces cerevisiae (strain ATCC 204508 / S288c) (Baker's yeast)).